An 86-amino-acid polypeptide reads, in one-letter code: Mu-theraphotoxin-Cg2a 1 (86 aa).

Positions 1-21 (MKVSVVITLAVLGIMFVWASA) are cleaved as a signal peptide. The propeptide occupies 22 to 50 (AELEERGSDQRDSPAWLKSMERIFQSEER). Disulfide bonds link Cys-52/Cys-66, Cys-59/Cys-71, and Cys-65/Cys-78. Phenylalanine amide is present on Phe-84.

This sequence belongs to the neurotoxin 10 (Hwtx-1) family. 37 (Jztx-31) subfamily. In terms of tissue distribution, expressed by the venom gland.

The protein resides in the secreted. Its function is as follows. Inhibits both peak current and fast inactivation of voltage-gated sodium channels (Nav) channels. Inhibits the inactivation of Nav on DRG neurons (EC(50)=1.77 uM) and peak current of cardiac myocytes (IC(50)=0.90 uM). This chain is Mu-theraphotoxin-Cg2a 1, found in Chilobrachys guangxiensis (Chinese earth tiger tarantula).